Here is a 166-residue protein sequence, read N- to C-terminus: Cytochrome c-type biogenesis protein CcmE (166 aa).

The Cytoplasmic portion of the chain corresponds to 1 to 13 (MNFLPKSRKARRR). The chain crosses the membrane as a helical; Signal-anchor for type II membrane protein span at residues 14 to 34 (LTILAVAAPVVALAVGLALWG). The Periplasmic portion of the chain corresponds to 35–166 (MRDAISLFYT…QGYKPGKPNT (132 aa)). Heme-binding residues include His-128 and Tyr-132. Positions 143 to 166 (EQGEWRGDGQAPSYQGYKPGKPNT) are disordered.

This sequence belongs to the CcmE/CycJ family.

The protein resides in the cell inner membrane. Functionally, heme chaperone required for the biogenesis of c-type cytochromes. Transiently binds heme delivered by CcmC and transfers the heme to apo-cytochromes in a process facilitated by CcmF and CcmH. The sequence is that of Cytochrome c-type biogenesis protein CcmE from Caulobacter sp. (strain K31).